Here is a 110-residue protein sequence, read N- to C-terminus: Cytochrome subunit of sulfide dehydrogenase (110 aa).

Residues 1 to 16 form the signal peptide; sequence MLAAAPLLLASGNGFA. Cysteine 41, cysteine 44, histidine 45, and methionine 83 together coordinate heme c.

Dimer of one cytochrome and one flavoprotein. Binds 1 heme c group covalently per subunit.

The protein localises to the periplasm. In terms of biological role, monoheme cytochrome that function as the electron transport subunit of sulfide dehydrogenase. This Chlorobaculum tepidum (strain ATCC 49652 / DSM 12025 / NBRC 103806 / TLS) (Chlorobium tepidum) protein is Cytochrome subunit of sulfide dehydrogenase (fccA).